The following is a 517-amino-acid chain: GMP synthase [glutamine-hydrolyzing] (517 aa).

In terms of domain architecture, Glutamine amidotransferase type-1 spans 9–199; sequence RILILDFGSQ…VLGICGCERL (191 aa). The Nucleophile role is filled by cysteine 86. Residues histidine 173 and glutamate 175 contribute to the active site. Residues 200-392 enclose the GMPS ATP-PPase domain; sequence WTSESIIEDA…LGLPYEMLYR (193 aa). 227–233 provides a ligand contact to ATP; the sequence is SGGVDSS.

As to quaternary structure, homodimer.

The enzyme catalyses XMP + L-glutamine + ATP + H2O = GMP + L-glutamate + AMP + diphosphate + 2 H(+). It participates in purine metabolism; GMP biosynthesis; GMP from XMP (L-Gln route): step 1/1. Its function is as follows. Catalyzes the synthesis of GMP from XMP. This Vibrio vulnificus (strain CMCP6) protein is GMP synthase [glutamine-hydrolyzing].